The sequence spans 1377 residues: DNA-directed RNA polymerase subunit beta' (1377 aa).

Zn(2+) is bound by residues Cys-70, Cys-72, Cys-85, and Cys-88. Asp-460, Asp-462, and Asp-464 together coordinate Mg(2+). The Zn(2+) site is built by Cys-808, Cys-882, Cys-889, and Cys-892.

The protein belongs to the RNA polymerase beta' chain family. In terms of assembly, the RNAP catalytic core consists of 2 alpha, 1 beta, 1 beta' and 1 omega subunit. When a sigma factor is associated with the core the holoenzyme is formed, which can initiate transcription. The cofactor is Mg(2+). Requires Zn(2+) as cofactor.

The catalysed reaction is RNA(n) + a ribonucleoside 5'-triphosphate = RNA(n+1) + diphosphate. In terms of biological role, DNA-dependent RNA polymerase catalyzes the transcription of DNA into RNA using the four ribonucleoside triphosphates as substrates. This Geotalea uraniireducens (strain Rf4) (Geobacter uraniireducens) protein is DNA-directed RNA polymerase subunit beta'.